A 228-amino-acid polypeptide reads, in one-letter code: UPF0056 membrane protein MJ0972 (228 aa).

5 helical membrane passes run 22–42 (FYIY…LIPI), 68–88 (VVLL…GITI), 133–153 (VPLA…MILI), 163–183 (GVVV…LSLT), and 201–221 (IMGL…IVGL).

The protein belongs to the UPF0056 (MarC) family.

The protein localises to the cell membrane. In Methanocaldococcus jannaschii (strain ATCC 43067 / DSM 2661 / JAL-1 / JCM 10045 / NBRC 100440) (Methanococcus jannaschii), this protein is UPF0056 membrane protein MJ0972.